The primary structure comprises 460 residues: V-type ATP synthase beta chain 2 (460 aa).

The protein belongs to the ATPase alpha/beta chains family.

Produces ATP from ADP in the presence of a proton gradient across the membrane. The V-type beta chain is a regulatory subunit. The sequence is that of V-type ATP synthase beta chain 2 from Clostridium tetani (strain Massachusetts / E88).